Consider the following 146-residue polypeptide: Cyanate hydratase (146 aa).

Catalysis depends on residues Arg87, Glu90, and Ser113.

This sequence belongs to the cyanase family.

It carries out the reaction cyanate + hydrogencarbonate + 3 H(+) = NH4(+) + 2 CO2. In terms of biological role, catalyzes the reaction of cyanate with bicarbonate to produce ammonia and carbon dioxide. In Pseudomonas putida (strain ATCC 700007 / DSM 6899 / JCM 31910 / BCRC 17059 / LMG 24140 / F1), this protein is Cyanate hydratase.